The chain runs to 239 residues: Myogenic factor 6 (239 aa).

The segment at 27–64 (QHLDMPGVSPLYDGNHSPLSPGPDNVPSETGGESSGDE) is disordered. The region spanning 96–147 (DRRKAATLRERRRLKKINEAFDALKRKSVANPNQRLPKVEILRSAISYIERL) is the bHLH domain. The interval 155 to 184 (DEQERGQSGASDTRNDKEQNRPSGGDYCWK) is disordered.

Efficient DNA binding requires dimerization with another bHLH protein.

It is found in the nucleus. Functionally, involved in muscle differentiation (myogenic factor). Induces fibroblasts to differentiate into myoblasts. Probable sequence specific DNA-binding protein. The sequence is that of Myogenic factor 6 (myf6) from Tetraodon nigroviridis (Spotted green pufferfish).